We begin with the raw amino-acid sequence, 344 residues long: Phosphoribosylformylglycinamidine cyclo-ligase (344 aa).

This sequence belongs to the AIR synthase family.

Its subcellular location is the cytoplasm. The catalysed reaction is 2-formamido-N(1)-(5-O-phospho-beta-D-ribosyl)acetamidine + ATP = 5-amino-1-(5-phospho-beta-D-ribosyl)imidazole + ADP + phosphate + H(+). The protein operates within purine metabolism; IMP biosynthesis via de novo pathway; 5-amino-1-(5-phospho-D-ribosyl)imidazole from N(2)-formyl-N(1)-(5-phospho-D-ribosyl)glycinamide: step 2/2. The protein is Phosphoribosylformylglycinamidine cyclo-ligase of Haemophilus influenzae (strain 86-028NP).